Reading from the N-terminus, the 259-residue chain is ATP synthase subunit a (259 aa).

Transmembrane regions (helical) follow at residues 37 to 57 (LSIT…FLFM), 101 to 121 (YFPA…LGLI), 131 to 151 (LVVT…LAIV), 157 to 177 (FIGF…MVPI), 203 to 223 (VLAI…LMPA), and 232 to 252 (FELF…CVYI).

Belongs to the ATPase A chain family. As to quaternary structure, F-type ATPases have 2 components, CF(1) - the catalytic core - and CF(0) - the membrane proton channel. CF(1) has five subunits: alpha(3), beta(3), gamma(1), delta(1), epsilon(1). CF(0) has three main subunits: a(1), b(2) and c(9-12). The alpha and beta chains form an alternating ring which encloses part of the gamma chain. CF(1) is attached to CF(0) by a central stalk formed by the gamma and epsilon chains, while a peripheral stalk is formed by the delta and b chains.

The protein localises to the cell inner membrane. Functionally, key component of the proton channel; it plays a direct role in the translocation of protons across the membrane. This Magnetococcus marinus (strain ATCC BAA-1437 / JCM 17883 / MC-1) protein is ATP synthase subunit a.